We begin with the raw amino-acid sequence, 264 residues long: Phosphate import ATP-binding protein PstB (264 aa).

The 240-residue stretch at 11 to 250 folds into the ABC transporter domain; that stretch reads LKAEALSVYY…DTTEKIFDSP (240 aa). An ATP-binding site is contributed by 43 to 50; the sequence is GPSGCGKS.

Belongs to the ABC transporter superfamily. Phosphate importer (TC 3.A.1.7) family. The complex is composed of two ATP-binding proteins (PstB), two transmembrane proteins (PstC and PstA) and a solute-binding protein (PstS).

It localises to the cell inner membrane. The enzyme catalyses phosphate(out) + ATP + H2O = ADP + 2 phosphate(in) + H(+). In terms of biological role, part of the ABC transporter complex PstSACB involved in phosphate import. Responsible for energy coupling to the transport system. This chain is Phosphate import ATP-binding protein PstB, found in Synechococcus sp. (strain ATCC 27144 / PCC 6301 / SAUG 1402/1) (Anacystis nidulans).